We begin with the raw amino-acid sequence, 510 residues long: Probable mannosyl-oligosaccharide alpha-1,2-mannosidase 1B (510 aa).

An N-terminal signal peptide occupies residues 1 to 21 (MHFSSLSLPLTALSLVTPSLA). Residues Asn-35, Asn-95, Asn-182, and Asn-249 are each glycosylated (N-linked (GlcNAc...) asparagine). A disulfide bridge links Cys-332 with Cys-361. N-linked (GlcNAc...) asparagine glycosylation occurs at Asn-366. The Proton donor role is filled by Glu-375. Thr-501 is a binding site for Ca(2+).

The protein belongs to the glycosyl hydrolase 47 family. Monomer. The cofactor is Ca(2+). It depends on Mg(2+) as a cofactor.

It localises to the cytoplasmic vesicle lumen. It carries out the reaction N(4)-(alpha-D-Man-(1-&gt;2)-alpha-D-Man-(1-&gt;2)-alpha-D-Man-(1-&gt;3)-[alpha-D-Man-(1-&gt;2)-alpha-D-Man-(1-&gt;3)-[alpha-D-Man-(1-&gt;2)-alpha-D-Man-(1-&gt;6)]-alpha-D-Man-(1-&gt;6)]-beta-D-Man-(1-&gt;4)-beta-D-GlcNAc-(1-&gt;4)-beta-D-GlcNAc)-L-asparaginyl-[protein] (N-glucan mannose isomer 9A1,2,3B1,2,3) + 4 H2O = N(4)-(alpha-D-Man-(1-&gt;3)-[alpha-D-Man-(1-&gt;3)-[alpha-D-Man-(1-&gt;6)]-alpha-D-Man-(1-&gt;6)]-beta-D-Man-(1-&gt;4)-beta-D-GlcNAc-(1-&gt;4)-beta-D-GlcNAc)-L-asparaginyl-[protein] (N-glucan mannose isomer 5A1,2) + 4 beta-D-mannose. The catalysed reaction is N(4)-(alpha-D-Man-(1-&gt;2)-alpha-D-Man-(1-&gt;2)-alpha-D-Man-(1-&gt;3)-[alpha-D-Man-(1-&gt;3)-[alpha-D-Man-(1-&gt;2)-alpha-D-Man-(1-&gt;6)]-alpha-D-Man-(1-&gt;6)]-beta-D-Man-(1-&gt;4)-beta-D-GlcNAc-(1-&gt;4)-beta-D-GlcNAc)-L-asparaginyl-[protein] (N-glucan mannose isomer 8A1,2,3B1,3) + 3 H2O = N(4)-(alpha-D-Man-(1-&gt;3)-[alpha-D-Man-(1-&gt;3)-[alpha-D-Man-(1-&gt;6)]-alpha-D-Man-(1-&gt;6)]-beta-D-Man-(1-&gt;4)-beta-D-GlcNAc-(1-&gt;4)-beta-D-GlcNAc)-L-asparaginyl-[protein] (N-glucan mannose isomer 5A1,2) + 3 beta-D-mannose. The protein operates within protein modification; protein glycosylation. In terms of biological role, involved in the maturation of Asn-linked oligosaccharides. Progressively trims alpha-1,2-linked mannose residues from Man(9)GlcNAc(2) to produce Man(5)GlcNAc(2). The polypeptide is Probable mannosyl-oligosaccharide alpha-1,2-mannosidase 1B (mns1B) (Aspergillus flavus (strain ATCC 200026 / FGSC A1120 / IAM 13836 / NRRL 3357 / JCM 12722 / SRRC 167)).